Consider the following 923-residue polypeptide: SPX and EXS domain-containing protein 1 (923 aa).

Residues 1 to 326 (MKFGKKLRFE…PMNSSIKLDQ (326 aa)) form the SPX domain. Composition is skewed to low complexity over residues 94–147 (QEQS…QQQQ) and 186–195 (TTTTTTTTTT). 2 disordered regions span residues 94 to 150 (QEQS…QDLK) and 185 to 208 (PTTT…FKNK). 9 helical membrane-spanning segments follow: residues 382–402 (LKLG…IILF), 416–436 (FVST…VWLW), 471–491 (ASFL…TVTG), 499–519 (PAQV…FFPF), 529–551 (LLFI…RALF), 591–611 (SIAL…QCIL), 620–640 (IHLG…FSAL), 655–675 (ILWC…DVVV), and 700–720 (WSYY…TLTI). Residues 585-785 (RCNQVNSIAL…KNEVPKVESP (201 aa)) form the EXS domain. Residues 793–871 (SSYPYRQDNF…NNSPSGSNSS (79 aa)) form a disordered region.

It belongs to the SYG1 (TC 2.A.94) family.

It is found in the membrane. This Dictyostelium discoideum (Social amoeba) protein is SPX and EXS domain-containing protein 1.